The chain runs to 2357 residues: Protein transport protein Sec16A (2357 aa).

Disordered stretches follow at residues 1–25 (MQPP…RSVF) and 57–303 (FSRQ…STFR). Low complexity-rich tracts occupy residues 64-76 (STPL…SSPP) and 210-227 (QMPG…PSGQ). Positions 285–303 (HLQSGSHLANNSDPESTFR) are enriched in polar residues. A phosphoserine mark is found at Ser296, Ser314, and Ser331. 7 disordered regions span residues 335–359 (NPLA…GSGC), 508–540 (APDA…ARPQ), 553–603 (KPED…TGIF), 758–828 (VQPP…NPPV), 924–987 (LLVQ…SSHQ), 1006–1038 (VNVY…PNLD), and 1059–1151 (QELV…APGP). The segment covering 520–536 (SVSSSYSSRSHGRLSGS) has biased composition (low complexity). A phosphoserine mark is found at Ser559, Ser569, Ser587, Ser589, and Ser592. Residue Thr593 is modified to Phosphothreonine. At Ser595 the chain carries Phosphoserine. 2 stretches are compositionally biased toward polar residues: residues 766-778 (SGQQ…SAAP) and 803-825 (LQSQ…SLQN). Positions 1006-1028 (VNVYNPSHSDSLASQQSVASHPR) are enriched in polar residues. The required for localization to endoplasmic reticulum exit sites stretch occupies residues 1019 to 1890 (SQQSVASHPR…QQVERQIKEG (872 aa)). Ser1069 carries the phosphoserine modification. Residues 1080–1101 (ELSNPESLPAQGQAQNSAQSPA) are compositionally biased toward polar residues. The interval 1101 to 1400 (ASLVLVDAGQ…EAPLPPGSFH (300 aa)) is interaction with MIA3. Residues 1102-1405 (SLVLVDAGQQ…PGSFHGDFAY (304 aa)) are required for endoplasmic reticulum localization. A compositionally biased stretch (low complexity) spans 1118 to 1131 (QSSSVSLVSSGSGQ). The segment covering 1138–1151 (QPWPQPVPALAPGP) has biased composition (pro residues). Ser1207, Ser1229, and Ser1305 each carry phosphoserine. A disordered region spans residues 1215 to 1248 (YPEPERPSSRASHSSERPPPRQGYPEGYYSSKSG). Residues 1216–1233 (PEPERPSSRASHSSERPP) are compositionally biased toward basic and acidic residues. The span at 1307–1322 (FGDRPEKRDNNWRYDP) shows a compositional bias: basic and acidic residues. The segment at 1307–1378 (FGDRPEKRDN…SLSSHSHQSQ (72 aa)) is disordered. Thr1325 carries the phosphothreonine modification. Phosphoserine is present on residues Ser1327, Ser1347, Ser1350, Ser1356, Ser1359, Ser1362, Ser1369, Ser1573, and Ser1601. Residues 1333 to 1354 (DPHRDPYGEEVDRRSVHSEHSA) show a composition bias toward basic and acidic residues. Low complexity predominate over residues 1356–1375 (SLHSAHSLASRRSSLSSHSH). The segment at 1434–1890 (QVSSRPTSPE…QQVERQIKEG (457 aa)) is central conserved domain (CCD); mediates interaction with RNF183, LRRK2 and SEC13. Residue Thr1907 is modified to Phosphothreonine. Phosphoserine occurs at positions 1939, 1964, 2022, and 2042. 3 disordered regions span residues 2049 to 2110 (KFAN…SWFF), 2141 to 2181 (VNLN…PVNM), and 2226 to 2328 (NLFV…MPFY). Thr2054 carries the post-translational modification Phosphothreonine. 3 positions are modified to phosphoserine: Ser2056, Ser2073, and Ser2083. The segment covering 2087 to 2106 (ETKRPGQAAKKETKEPKKGE) has biased composition (basic and acidic residues). Residues 2106 to 2357 (ESWFFRWLPG…IGQRKHLVLN (252 aa)) are required for interaction with SEC23A. A phosphoserine mark is found at Ser2271 and Ser2291. 2 stretches are compositionally biased toward low complexity: residues 2289–2302 (ELSR…LSRE) and 2310–2324 (APGD…PSGA).

The protein belongs to the SEC16 family. As to quaternary structure, SEC16A and SEC16B are each present in multiple copies in a heteromeric complex. Interacts with SEC23A. Interacts with RNF183 and RNF152. Interacts with LRRK2 (via ROC domain). Interacts with SEC13. Interacts with RAB10. Interacts with MIA3. Interacts with GORASP2 in response to ER stress. As to expression, ubiquitous. Expressed at higher levels in the pancreas.

Its subcellular location is the endoplasmic reticulum membrane. The protein resides in the golgi apparatus membrane. It localises to the cytoplasm. The protein localises to the perinuclear region. It is found in the cytosol. Its subcellular location is the microsome membrane. Functionally, acts as a molecular scaffold that plays a key role in the organization of the endoplasmic reticulum exit sites (ERES), also known as transitional endoplasmic reticulum (tER). SAR1A-GTP-dependent assembly of SEC16A on the ER membrane forms an organized scaffold defining an ERES. Required for secretory cargo traffic from the endoplasmic reticulum to the Golgi apparatus. Mediates the recruitment of MIA3/TANGO to ERES. Regulates both conventional (ER/Golgi-dependent) and GORASP2-mediated unconventional (ER/Golgi-independent) trafficking of CFTR to cell membrane. Positively regulates the protein stability of E3 ubiquitin-protein ligases RNF152 and RNF183 and the ER localization of RNF183. Acts as a RAB10 effector in the regulation of insulin-induced SLC2A4/GLUT4 glucose transporter-enriched vesicles delivery to the cell membrane in adipocytes. The chain is Protein transport protein Sec16A (SEC16A) from Homo sapiens (Human).